Reading from the N-terminus, the 138-residue chain is ATP synthase epsilon chain (138 aa).

The protein belongs to the ATPase epsilon chain family. F-type ATPases have 2 components, CF(1) - the catalytic core - and CF(0) - the membrane proton channel. CF(1) has five subunits: alpha(3), beta(3), gamma(1), delta(1), epsilon(1). CF(0) has three main subunits: a, b and c.

Its subcellular location is the cell inner membrane. Its function is as follows. Produces ATP from ADP in the presence of a proton gradient across the membrane. This is ATP synthase epsilon chain from Bartonella henselae (strain ATCC 49882 / DSM 28221 / CCUG 30454 / Houston 1) (Rochalimaea henselae).